The chain runs to 734 residues: Phosphoribosylformylglycinamidine synthase subunit PurL (734 aa).

His46 is an active-site residue. The ATP site is built by Tyr49 and Lys88. Glu90 lines the Mg(2+) pocket. Substrate is bound by residues 91 to 94 (SHNH) and Arg113. The active-site Proton acceptor is His92. Asp114 is a Mg(2+) binding site. Gln237 lines the substrate pocket. Residue Asp265 participates in Mg(2+) binding. Residue 309–311 (ESQ) coordinates substrate. Positions 489 and 526 each coordinate ATP. Asn527 is a Mg(2+) binding site. Ser529 is a substrate binding site.

This sequence belongs to the FGAMS family. As to quaternary structure, monomer. Part of the FGAM synthase complex composed of 1 PurL, 1 PurQ and 2 PurS subunits.

Its subcellular location is the cytoplasm. The catalysed reaction is N(2)-formyl-N(1)-(5-phospho-beta-D-ribosyl)glycinamide + L-glutamine + ATP + H2O = 2-formamido-N(1)-(5-O-phospho-beta-D-ribosyl)acetamidine + L-glutamate + ADP + phosphate + H(+). It participates in purine metabolism; IMP biosynthesis via de novo pathway; 5-amino-1-(5-phospho-D-ribosyl)imidazole from N(2)-formyl-N(1)-(5-phospho-D-ribosyl)glycinamide: step 1/2. Its function is as follows. Part of the phosphoribosylformylglycinamidine synthase complex involved in the purines biosynthetic pathway. Catalyzes the ATP-dependent conversion of formylglycinamide ribonucleotide (FGAR) and glutamine to yield formylglycinamidine ribonucleotide (FGAM) and glutamate. The FGAM synthase complex is composed of three subunits. PurQ produces an ammonia molecule by converting glutamine to glutamate. PurL transfers the ammonia molecule to FGAR to form FGAM in an ATP-dependent manner. PurS interacts with PurQ and PurL and is thought to assist in the transfer of the ammonia molecule from PurQ to PurL. The chain is Phosphoribosylformylglycinamidine synthase subunit PurL from Gluconobacter oxydans (strain 621H) (Gluconobacter suboxydans).